An 85-amino-acid chain; its full sequence is U4-theraphotoxin-Hhn1w (85 aa).

An N-terminal signal peptide occupies residues 1–22 (MKVTLIAILTCAAVLALHTTAA). Positions 23–48 (EELEAESQLMEVGMPDTELAAVDEER) are excised as a propeptide. Disulfide bonds link Cys-52–Cys-66, Cys-56–Cys-77, and Cys-71–Cys-82.

This sequence belongs to the neurotoxin 12 (Hwtx-2) family. 02 (Hwtx-2) subfamily. Expressed by the venom gland.

The protein resides in the secreted. Functionally, postsynaptic neurotoxin. The protein is U4-theraphotoxin-Hhn1w of Cyriopagopus hainanus (Chinese bird spider).